Here is a 1368-residue protein sequence, read N- to C-terminus: Inactive tyrosine-protein kinase PRAG1 (1368 aa).

The tract at residues 200–236 is disordered; the sequence is CLKGPRPCTSPQPLRESLPSEDDSDQRCSPSGDSEGG. Tyr-238 carries the post-translational modification Phosphotyrosine; by CSK. Residues 297–330 form a disordered region; the sequence is STANPPHLGPKKPSLNSEAASSSDGLSCGSSRSG. Low complexity predominate over residues 317–330; sequence SSSDGLSCGSSRSG. Phosphotyrosine; by CSK occurs at positions 343 and 391. Disordered stretches follow at residues 392 to 443, 499 to 605, and 636 to 792; these read AESA…PNAA, LSSR…GAWS, and HSNS…KKIV. Residues 414–434 show a composition bias toward polar residues; it reads VSSGQVWTGDTWSQKTPSGWS. The span at 502 to 518 shows a compositional bias: basic and acidic residues; the sequence is RESHPHNMTENSSKEKP. Low complexity-rich tracts occupy residues 522–535 and 550–563; these read PKLS…SPVS and SGSS…SRVP. Composition is skewed to polar residues over residues 564 to 574 and 652 to 666; these read TNLTSSCQTNG and SGQN…SKSA. Phosphoserine is present on residues Ser-667 and Ser-716. 2 stretches are compositionally biased toward polar residues: residues 707–717 and 725–741; these read VSQSSAESLSP and SFTT…SRTC. A phosphoserine mark is found at Ser-753 and Ser-797. Disordered regions lie at residues 799–818 and 873–901; these read PDGF…SPKL and NSKG…VSSQ. The span at 887-901 shows a compositional bias: low complexity; the sequence is AATSTSSSQLSVSSQ. The tract at residues 906-949 is required for homodimerization; that stretch reads SSQLQLHSLLSSISSKEGTYAKLGGLYTQSLARLVTKCEDLFMG. One can recognise a Protein kinase domain in the interval 940-1291; sequence VTKCEDLFMG…EAKRVLQCLL (352 aa). Polar residues predominate over residues 1134–1144; it reads SSPGPSANPSV. Residues 1134 to 1166 are disordered; sequence SSPGPSANPSVPTTTSRCPSAAPAATTACQGGP. A compositionally biased stretch (low complexity) spans 1145–1162; the sequence is PTTTSRCPSAAPAATTAC. A required for homodimerization region spans residues 1293–1368; the sequence is GPRRELVEQP…LQSLKLLQLL (76 aa).

This sequence belongs to the protein kinase superfamily. As to quaternary structure, homodimer. Dimerization leads to the catalytic activation of CSK. Interacts (via C-terminus) with RND2. Interacts with CSK (via SH2 domain) in a Tyr-391 phosphorylation-dependent manner; this interaction potentiates kinase activity of CSK. Interacts with NOTCH1 intracellular domain (N1ICD). Forms a complex with N1ICD and MAML1, in a MAML1-dependent manner. In terms of processing, phosphorylated by CSK on Tyr-238, Tyr-343, and Tyr-391; Tyr-391 is a primary site of phosphorylation. As to expression, highly-expressed in brain, including cortical and hippocampal pyramidal neurons, as well as in kidney, spleen, colon and small intestine.

The protein localises to the cytoplasm. It is found in the nucleus. Its subcellular location is the cell junction. It localises to the focal adhesion. Functionally, catalytically inactive protein kinase that acts as a scaffold protein. Functions as an effector of the small GTPase RND2, which stimulates RhoA activity and inhibits NGF-induced neurite outgrowth. Promotes Src family kinase (SFK) signallig by regulating the subcellular localization of CSK, a negative regulator of these kinases, leading to the regulation of cell morphology and motility by a CSK-dependent mechanism. Acts as a critical coactivator of Notch signaling. The polypeptide is Inactive tyrosine-protein kinase PRAG1 (Rattus norvegicus (Rat)).